The following is a 140-amino-acid chain: Ubiquitin-like protein ATG12 (140 aa).

The disordered stretch occupies residues 1–50; it reads MAEEPQSVLQLPTSIAAGGEGLTDVSPETTTPEPPSSAAVSPGTEEPAGD. Residues 25–42 are compositionally biased toward low complexity; that stretch reads VSPETTTPEPPSSAAVSP. A Glycyl lysine isopeptide (Gly-Lys) (interchain with K-130 in ATG5) cross-link involves residue glycine 140.

It belongs to the ATG12 family. Forms a conjugate with ATG5. Part of the minor complex composed of 4 sets of ATG12-ATG5 and ATG16L1 (400 kDa); this complex interacts with ATG3 leading to disruption of ATG7 interaction and promotion of ATG8-like proteins lipidation. Forms an 800-kDa complex composed of ATG12-ATG5 and ATG16L2. Interacts with DHX58/RIG-1, IFIH1/MDA5 and MAVS/IPS-1 in monomeric form as well as in ATG12-ATG5 conjugate. The interaction with MAVS is further enhanced upon vesicular stomatitis virus (VSV) infection. Interacts with ATG3; this interaction is essential for phosphatidylethanolamine (PE)-conjugated ATG8-like proteins formation. Interacts with ATG7. Interacts with ATG10. The ATG12-ATG5 conjugate interacts with RAB33A; this interaction is bridged by ATG16L1 and promotes ATG12-ATG5-ATG16L1 complex recruitment to phagophores. Interacts with TECPR1. Interacts with SH3BGRL. The ATG12-ATG5 conjugate interacts with PDCD6IP (via the BRO1 domain); this interaction is bridged by ATG12 and promotes multiple PDCD6IP-mediated functions such as endolysosomal trafficking, macroautophagy and exosome biogenesis. Acetylated by EP300. In terms of tissue distribution, ubiquitous.

Its subcellular location is the cytoplasm. The protein resides in the preautophagosomal structure membrane. Its function is as follows. Ubiquitin-like protein involved in autophagy vesicles formation. Conjugation with ATG5 through a ubiquitin-like conjugating system involving also ATG7 as an E1-like activating enzyme and ATG10 as an E2-like conjugating enzyme, is essential for its function. The ATG12-ATG5 conjugate acts as an E3-like enzyme which is required for lipidation of ATG8 family proteins and their association to the vesicle membranes. As part of the ATG8 conjugation system with ATG5 and ATG16L1, required for recruitment of LRRK2 to stressed lysosomes and induction of LRRK2 kinase activity in response to lysosomal stress. Functionally, (Microbial infection) May act as a proviral factor. In association with ATG5, negatively regulates the innate antiviral immune response by impairing the type I IFN production pathway upon vesicular stomatitis virus (VSV) infection. Required for the translation of incoming hepatitis C virus (HCV) RNA and, thereby, for the initiation of HCV replication, but not required once infection is established. The sequence is that of Ubiquitin-like protein ATG12 from Homo sapiens (Human).